A 1608-amino-acid polypeptide reads, in one-letter code: Adenylate cyclase type 10 (1608 aa).

Guanylate cyclase domains are found at residues 42–179 (VLMF…RLAQ) and 293–418 (TIVF…ARMM). Mg(2+) is bound by residues D47 and I48. Position 47-52 (47-52 (DISGFT)) interacts with ATP. K95 provides a ligand contact to hydrogencarbonate. Residue D99 participates in Mg(2+) binding. ATP contacts are provided by D99 and K144. Residues V167, R176, and M337 each coordinate hydrogencarbonate. ATP is bound by residues V406 and 412–416 (NIAAR).

It belongs to the adenylyl cyclase class-4/guanylyl cyclase family. Mg(2+) serves as cofactor. Requires Mn(2+) as cofactor. In terms of processing, cleavage may occur to generate the active 48 kDa form. Detected in testis (at protein level). Preferentially expressed in testis.

The protein resides in the cell membrane. It is found in the cytoplasm. Its subcellular location is the cytoskeleton. It localises to the perinuclear region. The protein localises to the nucleus. The protein resides in the cell projection. It is found in the cilium. Its subcellular location is the mitochondrion. The catalysed reaction is ATP = 3',5'-cyclic AMP + diphosphate. With respect to regulation, activated by manganese or magnesium ions. In the presence of magnesium ions, the enzyme is activated by bicarbonate. Calcium mildly increases the enzyme activity, also in the presence of magnesium ions. Catalyzes the formation of the signaling molecule cAMP. May function as sensor that mediates responses to changes in cellular bicarbonate and CO(2) levels. Has a critical role in mammalian spermatogenesis by producing the cAMP which regulates cAMP-responsive nuclear factors indispensable for sperm maturation in the epididymis. Induces capacitation, the maturational process that sperm undergo prior to fertilization. Involved in ciliary beat regulation. This is Adenylate cyclase type 10 (Adcy10) from Rattus norvegicus (Rat).